A 243-amino-acid polypeptide reads, in one-letter code: Probable sentrin-specific protease 8 (243 aa).

A protease region spans residues 12–185; the sequence is SAIYQSDINI…LYVLSIIEEL (174 aa). Active-site residues include His-109 and Asp-126. Cys-174 serves as the catalytic Nucleophile.

The protein belongs to the peptidase C48 family.

Functionally, protease that catalyzes two essential functions in the nedd8 pathway: processing of full-length nedd8 to its mature form and deconjugation of nedd8 from targeted proteins. This chain is Probable sentrin-specific protease 8 (senp8), found in Dictyostelium discoideum (Social amoeba).